We begin with the raw amino-acid sequence, 54 residues long: Potassium channel toxin alpha-KTx 14.2 (54 aa).

The signal sequence occupies residues 1–23; sequence MKIFFAILLILAVCSMAIWTVNG. Intrachain disulfides connect Cys-30-Cys-46, Cys-36-Cys-51, and Cys-40-Cys-53.

Belongs to the short scorpion toxin superfamily. Potassium channel inhibitor family. Alpha-KTx 14 subfamily. Expressed by the venom gland.

The protein resides in the secreted. Its function is as follows. Inhibits potassium channels. May be active towards small conductance calcium-activated potassium channels (KCNN, SK), and less active towards voltage-gated potassium channels (Kv/KCN). The protein is Potassium channel toxin alpha-KTx 14.2 of Olivierus martensii (Manchurian scorpion).